Reading from the N-terminus, the 252-residue chain is Transcriptional regulatory protein HptR (252 aa).

Positions 3 to 118 constitute a Response regulatory domain; the sequence is KVVICDDERI…QLEVILGRLV (116 aa). D55 carries the post-translational modification 4-aspartylphosphate. Positions 153-250 constitute an HTH araC/xylS-type domain; that stretch reads NQIVDQIKQS…QMSPSDYCKQ (98 aa). 2 consecutive DNA-binding regions (H-T-H motif) follow at residues 170–191 and 217–240; these read SDLI…KDHV and HYEI…KKYL.

In terms of processing, phosphorylated by HptS.

It is found in the cytoplasm. Member of the two-component regulatory system HptS/HptR that regulates genes involved in hexose phosphate transport system in response to changes in extracellular phosphate sources. Activates uhpT expression to facilitate glucose-6-phosphate/G6P utilization by directly binding to its promoter. Antagonizes CcpA-dependent transcription of a subset of CcpA-regulated genes involved in antibiotic susceptibility. The sequence is that of Transcriptional regulatory protein HptR (hptR) from Staphylococcus aureus (strain MRSA252).